The following is a 171-amino-acid chain: UPF0312 protein SE_0264 (171 aa).

This sequence belongs to the UPF0312 family.

The chain is UPF0312 protein SE_0264 from Staphylococcus epidermidis (strain ATCC 12228 / FDA PCI 1200).